A 311-amino-acid polypeptide reads, in one-letter code: HPr kinase/phosphorylase (311 aa).

Active-site residues include H139 and K160. ATP is bound at residue 154–161; it reads GASGVGKS. Residue S161 participates in Mg(2+) binding. Residue D178 is the Proton acceptor; for phosphorylation activity. Proton donor; for dephosphorylation activity of the active site. The important for the catalytic mechanism of both phosphorylation and dephosphorylation stretch occupies residues 202-211; it reads LEIRGIGIID. E203 contributes to the Mg(2+) binding site. Residue R244 is part of the active site. Residues 265-270 are important for the catalytic mechanism of dephosphorylation; sequence PVRPGR.

It belongs to the HPrK/P family. As to quaternary structure, homohexamer. The cofactor is Mg(2+).

The catalysed reaction is [HPr protein]-L-serine + ATP = [HPr protein]-O-phospho-L-serine + ADP + H(+). It carries out the reaction [HPr protein]-O-phospho-L-serine + phosphate + H(+) = [HPr protein]-L-serine + diphosphate. Functionally, catalyzes the ATP- as well as the pyrophosphate-dependent phosphorylation of a specific serine residue in HPr, a phosphocarrier protein of the phosphoenolpyruvate-dependent sugar phosphotransferase system (PTS). HprK/P also catalyzes the pyrophosphate-producing, inorganic phosphate-dependent dephosphorylation (phosphorolysis) of seryl-phosphorylated HPr (P-Ser-HPr). The two antagonistic activities of HprK/P are regulated by several intracellular metabolites, which change their concentration in response to the absence or presence of rapidly metabolisable carbon sources (glucose, fructose, etc.) in the growth medium. Therefore, by controlling the phosphorylation state of HPr, HPrK/P is a sensor enzyme that plays a major role in the regulation of carbon metabolism and sugar transport: it mediates carbon catabolite repression (CCR), and regulates PTS-catalyzed carbohydrate uptake and inducer exclusion. The polypeptide is HPr kinase/phosphorylase (Exiguobacterium sibiricum (strain DSM 17290 / CCUG 55495 / CIP 109462 / JCM 13490 / 255-15)).